A 292-amino-acid polypeptide reads, in one-letter code: Nucleotide-binding protein SACE_2139 (292 aa).

15–22 (GLSGAGRS) provides a ligand contact to ATP. 66–69 (DVRS) contacts GTP.

This sequence belongs to the RapZ-like family.

Its function is as follows. Displays ATPase and GTPase activities. This is Nucleotide-binding protein SACE_2139 from Saccharopolyspora erythraea (strain ATCC 11635 / DSM 40517 / JCM 4748 / NBRC 13426 / NCIMB 8594 / NRRL 2338).